A 346-amino-acid chain; its full sequence is Putative alpha/beta hydrolase R526 (346 aa).

It belongs to the AB hydrolase 3 family.

It localises to the virion. This is Putative alpha/beta hydrolase R526 from Acanthamoeba polyphaga mimivirus (APMV).